The sequence spans 636 residues: Sodium-dependent proline transporter (636 aa).

Residues 1–45 lie on the Cytoplasmic side of the membrane; that stretch reads MKKLQGAHLRKPVTPDLLMTPSDQGDVDLDVDFAAHRGNWTGKLD. At Thr-20 the chain carries Phosphothreonine. A Phosphoserine modification is found at Ser-22. The next 3 membrane-spanning stretches (helical) occupy residues 46–66, 74–93, and 117–137; these read FLLSCIGYCVGLGNVWRFPYR, AFLVPYFLMLAICGIPLFFL, and GAGAAMLLIVGLVAIYYNMII. Residues 138-214 lie on the Extracellular side of the membrane; it reads AYVLFYLFAS…QGIGSPGEIR (77 aa). N-linked (GlcNAc...) asparagine glycosylation occurs at Asn-182. 9 helical membrane-spanning segments follow: residues 215–233, 242–259, 295–312, 324–345, 378–397, 425–443, 459–479, 500–519, and 538–556; these read WNLCLCLLLAWVIVFLCIL, VVYFTATFPYLILLMLLV, IFYSLGVGFGGLLTFASY, FIVTLGNAITSILAGFAIFSVL, LPLSPFWSFLFFFMLLTLGL, VFSGLICVAMYLMGLILTT, SFGLMVVVITTCLAVTRVYGI, ACWLFLSPATLLALMVYSIV, and LGILMGLLSCLMIPAGMLV. Over 557–636 the chain is Cytoplasmic; the sequence is AVLREEGSLW…EIAEEEESMM (80 aa). Phosphoserine occurs at positions 573 and 582. Residue Thr-588 is modified to Phosphothreonine. The residue at position 591 (Tyr-591) is a Phosphotyrosine. 2 positions are modified to phosphoserine: Ser-598 and Ser-600.

The protein belongs to the sodium:neurotransmitter symporter (SNF) (TC 2.A.22) family. SLC6A7 subfamily. As to expression, brain specific (at protein level). Highly expressed in hippocampus, corpus striatum and temporal cortex. Also expressed in frontal cortex, occipital cortex and, at lower levels, in cerebellum and parietal cortex (at protein level).

It is found in the synaptic cell membrane. The enzyme catalyses L-proline(out) + chloride(out) + 2 Na(+)(out) = L-proline(in) + chloride(in) + 2 Na(+)(in). It carries out the reaction L-pipecolate(out) + chloride(out) + 2 Na(+)(out) = L-pipecolate(in) + chloride(in) + 2 Na(+)(in). In terms of biological role, brain specific sodium (and chloride)-dependent proline transporter. Terminates the action of proline by its high affinity sodium-dependent reuptake into presynaptic terminals. This Homo sapiens (Human) protein is Sodium-dependent proline transporter.